The following is a 394-amino-acid chain: Phosphoglycerate kinase (394 aa).

Residues 21 to 23 (DFN), R36, 59 to 62 (HLGR), R118, and R151 contribute to the substrate site. At S183 the chain carries Phosphoserine. K201 lines the ATP pocket. T299 bears the Phosphothreonine mark. Residues E323 and 350 to 353 (GGDS) contribute to the ATP site.

The protein belongs to the phosphoglycerate kinase family. In terms of assembly, monomer.

The protein resides in the cytoplasm. It catalyses the reaction (2R)-3-phosphoglycerate + ATP = (2R)-3-phospho-glyceroyl phosphate + ADP. It functions in the pathway carbohydrate degradation; glycolysis; pyruvate from D-glyceraldehyde 3-phosphate: step 2/5. The protein is Phosphoglycerate kinase of Geobacillus kaustophilus (strain HTA426).